The chain runs to 207 residues: Large ribosomal subunit protein uL4 (207 aa).

Positions 50-75 are disordered; that stretch reads KTKTVSEVSGTTKKPFKQKGTGNARQ.

This sequence belongs to the universal ribosomal protein uL4 family. Part of the 50S ribosomal subunit.

In terms of biological role, one of the primary rRNA binding proteins, this protein initially binds near the 5'-end of the 23S rRNA. It is important during the early stages of 50S assembly. It makes multiple contacts with different domains of the 23S rRNA in the assembled 50S subunit and ribosome. Forms part of the polypeptide exit tunnel. This chain is Large ribosomal subunit protein uL4, found in Rickettsia felis (strain ATCC VR-1525 / URRWXCal2) (Rickettsia azadi).